Here is a 164-residue protein sequence, read N- to C-terminus: Protein SprT (164 aa).

A SprT-like domain is found at 14–156 (QLAESFFKRP…LCRRCRNTLV (143 aa)). His69 lines the Zn(2+) pocket. Glu70 is a catalytic residue. Position 73 (His73) interacts with Zn(2+).

The protein belongs to the SprT family. The cofactor is Zn(2+).

The protein resides in the cytoplasm. The chain is Protein SprT from Pseudomonas fluorescens (strain Pf0-1).